Here is a 152-residue protein sequence, read N- to C-terminus: TRAPP-associated protein TCA17 (152 aa).

The protein belongs to the TRAPP small subunits family. Sedlin subfamily. Interacts with the TRAPP II complex; TRAPP II subunits TRS33 and TRS65 are required for this interaction.

The protein localises to the golgi apparatus. It localises to the trans-Golgi network. Functionally, required, together with the TRAPP II subunit TRS33, for TRAPP II complex assembly or stability, and for proper Golgi localization of TRAPP and the Rab GTPase YPT31. The chain is TRAPP-associated protein TCA17 (TCA17) from Saccharomyces cerevisiae (strain ATCC 204508 / S288c) (Baker's yeast).